We begin with the raw amino-acid sequence, 346 residues long: MEKITLTRPDDWHLHLRDGEALKAVLPDTVRQFARAIVMPNLKPPVRTVAEAAAYHDRILAAIPPGRTFEPLMTLYLTDNTSPAEIQAAKESGFVKAVKYYPAGATTNSDLGVTDIRKCDAVFEAMQTVDLPLLLHGEVTDHRVDVFDREKVFIETYLRPLKERFPQLRIVLEHITTKDAVEFVLASDEKVAATITPQHLLFNRNSIFQGGIRPHFYCLPILKRETHREALLEAATSGNPKFFLGTDSAPHGRDRKESDCGCAGCYSALHALELYATVFEAADALDKLEGFASFYGPDFYQLPRNTEKITLTKTPWQIPDALPFPESSLVPLWAGQELSWKFAPVA.

His-13 and His-15 together coordinate Zn(2+). Substrate contacts are provided by residues 15–17 (HLR) and Asn-41. Zn(2+) is bound by residues Lys-99, His-136, and His-174. Lys-99 is subject to N6-carboxylysine. A substrate-binding site is contributed by His-136. Leu-219 is a substrate binding site. Asp-247 contacts Zn(2+). Residue Asp-247 is part of the active site. Residues His-251 and Ala-263 each contribute to the substrate site.

The protein belongs to the metallo-dependent hydrolases superfamily. DHOase family. Class II DHOase subfamily. In terms of assembly, homodimer. The cofactor is Zn(2+).

It catalyses the reaction (S)-dihydroorotate + H2O = N-carbamoyl-L-aspartate + H(+). It participates in pyrimidine metabolism; UMP biosynthesis via de novo pathway; (S)-dihydroorotate from bicarbonate: step 3/3. Functionally, catalyzes the reversible cyclization of carbamoyl aspartate to dihydroorotate. The polypeptide is Dihydroorotase (Picosynechococcus sp. (strain ATCC 27264 / PCC 7002 / PR-6) (Agmenellum quadruplicatum)).